Reading from the N-terminus, the 369-residue chain is Lipoyl synthase, mitochondrial (369 aa).

Residues 1-32 (MLTKGVRALAWSPRRYITLDAEAAKPVVAKRR) constitute a mitochondrion transit peptide. Residues Cys-106, Cys-111, Cys-117, Cys-136, Cys-140, Cys-143, and Ser-351 each coordinate [4Fe-4S] cluster. Positions 121-340 (NKGSATATIM…KEKALELGFL (220 aa)) constitute a Radical SAM core domain.

Belongs to the radical SAM superfamily. Lipoyl synthase family. It depends on [4Fe-4S] cluster as a cofactor.

Its subcellular location is the mitochondrion. It carries out the reaction [[Fe-S] cluster scaffold protein carrying a second [4Fe-4S](2+) cluster] + N(6)-octanoyl-L-lysyl-[protein] + 2 oxidized [2Fe-2S]-[ferredoxin] + 2 S-adenosyl-L-methionine + 4 H(+) = [[Fe-S] cluster scaffold protein] + N(6)-[(R)-dihydrolipoyl]-L-lysyl-[protein] + 4 Fe(3+) + 2 hydrogen sulfide + 2 5'-deoxyadenosine + 2 L-methionine + 2 reduced [2Fe-2S]-[ferredoxin]. Its pathway is protein modification; protein lipoylation via endogenous pathway; protein N(6)-(lipoyl)lysine from octanoyl-[acyl-carrier-protein]: step 2/2. In terms of biological role, catalyzes the radical-mediated insertion of two sulfur atoms into the C-6 and C-8 positions of the octanoyl moiety bound to the lipoyl domains of lipoate-dependent enzymes, thereby converting the octanoylated domains into lipoylated derivatives. The sequence is that of Lipoyl synthase, mitochondrial from Eremothecium gossypii (strain ATCC 10895 / CBS 109.51 / FGSC 9923 / NRRL Y-1056) (Yeast).